Here is a 132-residue protein sequence, read N- to C-terminus: Small ribosomal subunit protein uS12 (132 aa).

D89 carries the 3-methylthioaspartic acid modification. The tract at residues 102–132 (LDTSGVADRKQSRSKYGAKVPKAGAAPAKKK) is disordered. A compositionally biased stretch (low complexity) spans 118 to 132 (GAKVPKAGAAPAKKK).

This sequence belongs to the universal ribosomal protein uS12 family. Part of the 30S ribosomal subunit. Contacts proteins S8 and S17. May interact with IF1 in the 30S initiation complex.

With S4 and S5 plays an important role in translational accuracy. Functionally, interacts with and stabilizes bases of the 16S rRNA that are involved in tRNA selection in the A site and with the mRNA backbone. Located at the interface of the 30S and 50S subunits, it traverses the body of the 30S subunit contacting proteins on the other side and probably holding the rRNA structure together. The combined cluster of proteins S8, S12 and S17 appears to hold together the shoulder and platform of the 30S subunit. The chain is Small ribosomal subunit protein uS12 from Chlorobaculum tepidum (strain ATCC 49652 / DSM 12025 / NBRC 103806 / TLS) (Chlorobium tepidum).